We begin with the raw amino-acid sequence, 282 residues long: Undecaprenyl-diphosphatase (282 aa).

7 consecutive transmembrane segments (helical) span residues 1–21 (MTLF…FLPV), 40–60 (GAAF…IYFY), 85–105 (AAMG…GLLF), 117–137 (YWVS…EWSV), 196–216 (FSFL…LYHT), 229–249 (AITA…AFLI), and 258–278 (SIFI…IAAG).

The protein belongs to the UppP family.

The protein localises to the cell inner membrane. It catalyses the reaction di-trans,octa-cis-undecaprenyl diphosphate + H2O = di-trans,octa-cis-undecaprenyl phosphate + phosphate + H(+). Functionally, catalyzes the dephosphorylation of undecaprenyl diphosphate (UPP). Confers resistance to bacitracin. This Chlorobium phaeobacteroides (strain DSM 266 / SMG 266 / 2430) protein is Undecaprenyl-diphosphatase.